A 5405-amino-acid polypeptide reads, in one-letter code: IgGFc-binding protein (5405 aa).

The first 23 residues, 1–23 (MGALWSWWILWAGATLLWGLTQE), serve as a signal peptide directing secretion. The tract at residues 24 to 450 (ASVDLKNTGR…EPSCEGMQCA (427 aa)) is igGFc-binding. Asparagine 75 and asparagine 91 each carry an N-linked (GlcNAc...) asparagine glycan. The VWFD 1 domain maps to 470 to 650 (AVCRAQGDPH…KLDDGDYLCE (181 aa)). Intrachain disulfides connect cysteine 472-cysteine 611 and cysteine 494-cysteine 649. In terms of domain architecture, TIL 1 spans 745–799 (CPANSRYELCGPACPTSCNGAAAPSNCSGRPCVEGCVCLPGFVASGGACVPASSC). In terms of domain architecture, VWFD 2 spans 862–1041 (GTCQGSGDPH…WQEETRPGCG (180 aa)). Cystine bridges form between cysteine 864–cysteine 1003 and cysteine 886–cysteine 1040. Positions 1136-1189 (CPPHSHYEACSYGCPLSCGDLPVPGGCGSECHEGCVCDEGFALSGESCLPLASC) constitute a TIL 2 domain. A VWFD 3 domain is found at 1250–1429 (STCQASGDPH…EEVVPDSPCL (180 aa)). 2 disulfides stabilise this stretch: cysteine 1252–cysteine 1390 and cysteine 1274–cysteine 1428. Residue asparagine 1317 is glycosylated (N-linked (GlcNAc...) (complex) asparagine). The 54-residue stretch at 1532-1585 (CPPNSHYELCADTCSLGCSALSAPPQCQDGCAEGCQCDSGFLYNGQACVPIQQC) folds into the TIL 3 domain. In terms of domain architecture, VWFD 4 spans 1671–1854 (ATCWLWGDPH…RAPGWDPLCW (184 aa)). 3 disulfide bridges follow: cysteine 1673–cysteine 1815, cysteine 1695–cysteine 1853, and cysteine 1704–cysteine 1812. The N-linked (GlcNAc...) asparagine glycan is linked to asparagine 1743. The TIL 4 domain occupies 1950–2007 (CPENSHYEVCGSPCPASCPSPAPLTTPAVCEGPCVEGCQCDAGFVLSADRCVPLNNGC). One can recognise a VWFD 5 domain in the interval 2070-2253 (AECQAWGDPH…VSKPCPSPCT (184 aa)). Cystine bridges form between cysteine 2072-cysteine 2211 and cysteine 2094-cysteine 2252. An N-linked (GlcNAc...) asparagine glycan is attached at asparagine 2138. Positions 2337–2390 (CPAHSHYELCGDSCPGSCPSLSAPEGCESACREGCVCDAGFVLSGDTCVPVGQC) constitute a TIL 5 domain. Residues 2451–2630 (TTCQASGDPH…EEVVPDSPCL (180 aa)) enclose the VWFD 6 domain. Cystine bridges form between cysteine 2453–cysteine 2591 and cysteine 2475–cysteine 2629. The N-linked (GlcNAc...) asparagine glycan is linked to asparagine 2518. Residues 2733–2786 (CPQNSHYELCADTCSLGCSALSAPLQCPDGCAEGCQCDSGFLYNGQACVPIQQC) enclose the TIL 6 domain. The region spanning 2872–3055 (ATCWLWGDPH…RAPGWDPLCW (184 aa)) is the VWFD 7 domain. 3 cysteine pairs are disulfide-bonded: cysteine 2874-cysteine 3016, cysteine 2896-cysteine 3054, and cysteine 2905-cysteine 3013. The 58-residue stretch at 3151–3208 (CPENSHYEVCGPPCPASCPSPAPLTTPAVCEGPCVEGCQCDAGFVLSADRCVPLNNGC) folds into the TIL 7 domain. Positions 3271-3454 (AECQAWGDPH…VSKPCPSPCT (184 aa)) constitute a VWFD 8 domain. 2 disulfide bridges follow: cysteine 3273-cysteine 3412 and cysteine 3295-cysteine 3453. The 54-residue stretch at 3538 to 3591 (CPAHSHYELCGDSCPGSCPSLSAPEGCESACREGCVCDAGFVLSGDTCVPVGQC) folds into the TIL 8 domain. Positions 3652 to 3831 (TTCQASGDPH…EEVVPDSPCL (180 aa)) constitute a VWFD 9 domain. Disulfide bonds link cysteine 3654/cysteine 3792 and cysteine 3676/cysteine 3830. A glycan (N-linked (GlcNAc...) asparagine) is linked at asparagine 3719. The 54-residue stretch at 3934–3987 (CPQNSHYELCADTCSLGCSALSAPLQCPDGCAEGCQCDSGFLYNGQACVPIQQC) folds into the TIL 9 domain. Positions 4073-4256 (ATCWLWGDPH…RAPGWDPLCW (184 aa)) constitute a VWFD 10 domain. 3 cysteine pairs are disulfide-bonded: cysteine 4075-cysteine 4217, cysteine 4097-cysteine 4255, and cysteine 4106-cysteine 4214. N-linked (GlcNAc...) asparagine glycosylation is present at asparagine 4145. Positions 4352 to 4409 (CPENSHYEVCGPPCPASCPSPAPLTTPAVCEGPCVEGCQCDAGFVLSADRCVPLNNGC) constitute a TIL 10 domain. The 184-residue stretch at 4472–4655 (AECQAWGDPH…VSKPCPSPCT (184 aa)) folds into the VWFD 11 domain. 2 cysteine pairs are disulfide-bonded: cysteine 4474–cysteine 4613 and cysteine 4496–cysteine 4654. The N-linked (GlcNAc...) asparagine glycan is linked to asparagine 4540. Residues 4739 to 4792 (CPAHSHYELCGDSCPVSCPSLSAPEGCESACREGCVCDAGFVLSGDTCVPVGQC) form the TIL 11 domain. One can recognise a VWFD 12 domain in the interval 4854 to 5025 (GRCLANGGIH…RAPGSSKGCG (172 aa)). Disulfide bonds link cysteine 4856/cysteine 4986 and cysteine 4878/cysteine 5024. Positions 5121 to 5174 (CPAHSHYSICTRTCQGSCAALSGLTGCTTRCFEGCECDDRFLLSQGVCIPVQDC) constitute a TIL 12 domain. The region spanning 5233–5404 (GLCVLSVGAN…WRAQDFSPCY (172 aa)) is the VWFD 13 domain. A disulfide bridge connects residues cysteine 5235 and cysteine 5372.

Interacts with the Fc portion of IgG and with MUC2. In terms of tissue distribution, mainly expressed in placenta and colon epithelium. Expressed in thyroid, and down-regulated in thyroid carcinomas. Present in serum, with higher levels in patients with various autoimmune diseases (at protein level).

It localises to the secreted. Its function is as follows. May be involved in the maintenance of the mucosal structure as a gel-like component of the mucosa. The polypeptide is IgGFc-binding protein (FCGBP) (Homo sapiens (Human)).